A 157-amino-acid polypeptide reads, in one-letter code: Transcription elongation factor GreA (157 aa).

The protein belongs to the GreA/GreB family.

Functionally, necessary for efficient RNA polymerase transcription elongation past template-encoded arresting sites. The arresting sites in DNA have the property of trapping a certain fraction of elongating RNA polymerases that pass through, resulting in locked ternary complexes. Cleavage of the nascent transcript by cleavage factors such as GreA or GreB allows the resumption of elongation from the new 3'terminus. GreA releases sequences of 2 to 3 nucleotides. This is Transcription elongation factor GreA from Caulobacter vibrioides (strain ATCC 19089 / CIP 103742 / CB 15) (Caulobacter crescentus).